We begin with the raw amino-acid sequence, 467 residues long: Nuclear distribution protein nudF 1 (467 aa).

Residues 9 to 41 enclose the LisH domain; that stretch reads QAEELHKSIIAYLASVNLSESATTLRAELGDAV. Residues 60 to 87 adopt a coiled-coil conformation; the sequence is TSVVRLQKKIMDLESRCAALQSELDSAT. WD repeat units follow at residues 113–154, 156–196, 200–247, 250–289, 292–352, 354–393, 398–428, and 429–466; these read SHRS…RTVK, HTKA…KNIR, GHDH…CVKT, GHVD…TRST, GHEH…IKTL, GHDN…KCVR, THEH…NGTP, and AATT…RVFA. Low complexity predominate over residues 417-437; sequence GANGDAGANGTPAATTTSNGA. The tract at residues 417–441 is disordered; the sequence is GANGDAGANGTPAATTTSNGARQDP.

This sequence belongs to the WD repeat LIS1/nudF family. In terms of assembly, self-associates. Interacts with nudE and dynein.

It is found in the cytoplasm. Its subcellular location is the cytoskeleton. The protein resides in the spindle pole. Functionally, positively regulates the activity of the minus-end directed microtubule motor protein dynein. May enhance dynein-mediated microtubule sliding by targeting dynein to the microtubule plus end. Required for nuclear migration during vegetative growth as well as development. Required for retrograde early endosome (EE) transport from the hyphal tip. Required for localization of dynein to the mitotic spindle poles. Recruits additional proteins to the dynein complex at SPBs. This is Nuclear distribution protein nudF 1 from Aspergillus clavatus (strain ATCC 1007 / CBS 513.65 / DSM 816 / NCTC 3887 / NRRL 1 / QM 1276 / 107).